A 452-amino-acid polypeptide reads, in one-letter code: Transcription factor PERIANTHIA (452 aa).

The region spanning Asp-164–Leu-227 is the bZIP domain. The segment at Arg-166 to Lys-186 is basic motif. A leucine-zipper region spans residues Leu-192–Leu-206. Residues Val-233–Arg-449 form the DOG1 domain.

This sequence belongs to the bZIP family. As to quaternary structure, interacts with GRXC7/ROXY1. Interacts with BOP1 and BOP2.

It localises to the nucleus. In terms of biological role, transcriptional activator involved in the determination of floral organ number. Acts to determine floral organ patterning by establishing floral organ primordia in specific numbers and positions. Plays a role in regulating stem cell fate by directly controlling AG expression. Binds to the 5'-AAGAAT-3' cis-acting element found in AG promoter. Might represent a target for a post-translational modification by GRXC7/ROXY1. This Arabidopsis thaliana (Mouse-ear cress) protein is Transcription factor PERIANTHIA (PAN).